Consider the following 662-residue polypeptide: Chromosomal replication initiator protein DnaA (662 aa).

Residues 1-93 (MDDEQNVLAT…QVEGLGVRIA (93 aa)) form a domain I, interacts with DnaA modulators region. The segment at 93–322 (AAPATPTAER…STPAPANSSA (230 aa)) is domain II. The segment covering 96-105 (ATPTAERAAA) has biased composition (low complexity). Residues 96 to 294 (ATPTAERAAA…SDGPVERDDE (199 aa)) are disordered. Positions 114–123 (SRPERPRGER) are enriched in basic and acidic residues. Residues 166–199 (PPAAEYTPAAEYTPAAEYTPAAEYSPEPEYTPAT) are compositionally biased toward low complexity. Basic and acidic residues-rich tracts occupy residues 236-248 (TPRR…RRDA) and 261-290 (PGDR…GPVE). The tract at residues 323 to 539 (SLNAKYTFET…GALIRVTAFA (217 aa)) is domain III, AAA+ region. ATP is bound by residues G367, G369, K370, and T371. Residues 540–662 (SLNGQPLDLS…LTARIKQRSR (123 aa)) form a domain IV, binds dsDNA region.

The protein belongs to the DnaA family. Oligomerizes as a right-handed, spiral filament on DNA at oriC.

Its subcellular location is the cytoplasm. Its function is as follows. Plays an essential role in the initiation and regulation of chromosomal replication. ATP-DnaA binds to the origin of replication (oriC) to initiate formation of the DNA replication initiation complex once per cell cycle. Binds the DnaA box (a 9 base pair repeat at the origin) and separates the double-stranded (ds)DNA. Forms a right-handed helical filament on oriC DNA; dsDNA binds to the exterior of the filament while single-stranded (ss)DNA is stabiized in the filament's interior. The ATP-DnaA-oriC complex binds and stabilizes one strand of the AT-rich DNA unwinding element (DUE), permitting loading of DNA polymerase. After initiation quickly degrades to an ADP-DnaA complex that is not apt for DNA replication. Binds acidic phospholipids. The sequence is that of Chromosomal replication initiator protein DnaA from Nocardia farcinica (strain IFM 10152).